A 28-amino-acid polypeptide reads, in one-letter code: TRRTAFLFDELSLWHSASQYALILPVGG.

Homotetramer.

The catalysed reaction is an N-acetylarylalkylamine + H2O = an aralkylamine + acetate. With respect to regulation, activated by divalent metal ions. Inhibited by certain thiol reagents. Functionally, shows a strict specificity for N-acetyl arylalkylamines but not acetanilide derivatives. This chain is Arylalkyl acylamidase, found in Pseudomonas putida (Arthrobacter siderocapsulatus).